Consider the following 529-residue polypeptide: Bifunctional purine biosynthesis protein PurH (529 aa).

In terms of domain architecture, MGS-like spans 1 to 148 (MQQRRPVRRA…KNHKDVAIVV (148 aa)).

It belongs to the PurH family.

It carries out the reaction (6R)-10-formyltetrahydrofolate + 5-amino-1-(5-phospho-beta-D-ribosyl)imidazole-4-carboxamide = 5-formamido-1-(5-phospho-D-ribosyl)imidazole-4-carboxamide + (6S)-5,6,7,8-tetrahydrofolate. The enzyme catalyses IMP + H2O = 5-formamido-1-(5-phospho-D-ribosyl)imidazole-4-carboxamide. Its pathway is purine metabolism; IMP biosynthesis via de novo pathway; 5-formamido-1-(5-phospho-D-ribosyl)imidazole-4-carboxamide from 5-amino-1-(5-phospho-D-ribosyl)imidazole-4-carboxamide (10-formyl THF route): step 1/1. The protein operates within purine metabolism; IMP biosynthesis via de novo pathway; IMP from 5-formamido-1-(5-phospho-D-ribosyl)imidazole-4-carboxamide: step 1/1. The chain is Bifunctional purine biosynthesis protein PurH from Klebsiella pneumoniae subsp. pneumoniae (strain ATCC 700721 / MGH 78578).